A 197-amino-acid chain; its full sequence is Small ribosomal subunit protein uS7 (197 aa).

This sequence belongs to the universal ribosomal protein uS7 family. Part of the 30S ribosomal subunit.

Its function is as follows. One of the primary rRNA binding proteins, it binds directly to 16S rRNA where it nucleates assembly of the head domain of the 30S subunit. Is located at the subunit interface close to the decoding center. This Methanopyrus kandleri (strain AV19 / DSM 6324 / JCM 9639 / NBRC 100938) protein is Small ribosomal subunit protein uS7.